An 84-amino-acid chain; its full sequence is MSSGGLLLLLGLLTLCAELTPVSSQIRPAFCYEDPPFFQKCGAFVDSYYFNRSRITCVHFFYGQCDVNQNHFTTMSECNRVCHG.

An N-terminal signal peptide occupies residues 1–24; that stretch reads MSSGGLLLLLGLLTLCAELTPVSS. Glutamine 25 is modified (pyrrolidone carboxylic acid). The BPTI/Kunitz inhibitor domain maps to 31–82; the sequence is CYEDPPFFQKCGAFVDSYYFNRSRITCVHFFYGQCDVNQNHFTTMSECNRVC. 3 cysteine pairs are disulfide-bonded: cysteine 31/cysteine 82, cysteine 41/cysteine 65, and cysteine 57/cysteine 78.

The protein belongs to the venom Kunitz-type family. As to quaternary structure, heterodimer of an alpha (Kunitz-type) and a beta (phospholipase A2 homolog) chains; non-covalently-linked. As to expression, expressed by the venom gland.

The protein localises to the secreted. MitTx, a heteromeric complex between Kunitz- and phospholipase-A2-like proteins, potently, persistently and selectively activates rat and chicken acid-sensing ion channel ASIC1. Both alternatively spliced rat isoforms ASIC1a and ASIC1b are activated, with a higher potency for ASIC1a (EC(50)=9.4 nM) vs ASIC1b (EC(50)=23 nM). The rat ASIC3 subtype is also sensitive to the heterodimer, but with a lower potency (EC(50)=830 nM). On rat ASIC2a, the toxin shows a very weak activation, but produces a remarkable potentiation (&gt;100-fold) of protons when the extracellular pH drops below neutrality. Moderate and weak activations are also observed on the heterotrimers Asic1a-Asic2a and Asic1a-Asic3 (expressed in CHO cells), respectively. The binding sites of the beta subunit of MitTx and the spider psalmotoxin-1 overlap, explaining why these toxins are mutually exclusive. In vivo, the heterodimer elicits robust pain-related behavior in mice by activation of ASIC1 channels on capsaicin-sensitive nerve fibers. In Micrurus tener tener (Texas coral snake), this protein is Kunitz-type neurotoxin MitTx-alpha.